A 689-amino-acid chain; its full sequence is UvrABC system protein C (689 aa).

Positions 16–95 constitute a GIY-YIG domain; that stretch reads TNPGVYRFRD…IKEFAPRFNI (80 aa). Residues 208–243 enclose the UVR domain; the sequence is KPYIRELTRQMNEAAECMDFETAAARRDDVGALERV. The interval 316–337 is disordered; the sequence is LAPAASGRRRTARHGSEDVVGQ.

The protein belongs to the UvrC family. Interacts with UvrB in an incision complex.

It localises to the cytoplasm. Functionally, the UvrABC repair system catalyzes the recognition and processing of DNA lesions. UvrC both incises the 5' and 3' sides of the lesion. The N-terminal half is responsible for the 3' incision and the C-terminal half is responsible for the 5' incision. The polypeptide is UvrABC system protein C (Kocuria rhizophila (strain ATCC 9341 / DSM 348 / NBRC 103217 / DC2201)).